Consider the following 5206-residue polypeptide: Multifunctional-autoprocessing repeats-in-toxin (5206 aa).

The first 19 residues, 1–19 (MGKPFWRSVEYFFTGNYSA), serve as a signal peptide directing secretion. 39 RtxA repeats span residues 101–118 (GAAGGVSIDHLGNNGDVS), 121–138 (GAAAYNGITRKGLSGNVT), 141–157 (GAGGYNALWHETNQGNL), 161–184 (GAGAGNKLDRTWFNRYQGSRGDVT), 187–204 (GAGAANSISSRVETGNIT), 207–224 (GAGADNHLVRKGKVGDIT), 255–272 (GVGGYNSLYSDVAHGDIH), 275–291 (GGGAYNTITRKGSGSSF), 584–601 (GAGGGNVIKSNVTRGNVY), 604–620 (GGGIANVILHSSQFGNT), 624–641 (GGGAANVIVKSGEEGDLT), 644–658 (GAGLANVLVHQSKQG), 741–753 (AGGANVLTKVGDG), 759–771 (MLGGANVITHISG), 782–798 (ALGGANILTKKGKGNTL), 801–816 (MGGGANVLTHVGDGTT), 820–835 (MVGGANILTKVGNGDT), 841–855 (GVGNVLTHVGDGQTL), 858–875 (MGAAGNIFTKVGDGTSIA), 877–891 (MIGAGNIFTHVGEGN), 896–910 (MGGLGNVFTKVGNGD), 915–932 (MVAEANVFTHIGDGMSVA), 934–950 (MLAKGNVATKVGNGTTL), 972–984 (MIGQANIMTKVGN), 991–1006 (MVGKANIYTHVGDGTS), 1031–1043 (GKANIMTHVGDGL), 1067–1079 (AAAKANVVTHVGD), 1087–1102 (AGKGNILTKVGEGTTV), 1110–1122 (GNVMTHVGDGTTI), 1125–1142 (AKGKANIITKVGDGLGVN), 1145–1159 (WGQANVFTQVGDGDR), 1163–1179 (AKGEANIITKVGDGKEV), 1184–1199 (GKANIITHVGNGDDYT), 1201–1217 (AWGKANVITKVGNGRNV), 1220–1236 (AKGEANIVTQVGDGDSF), 1242–1256 (KGNIVTKVGDGMQVT), 1258–1275 (AKGKANITTTVGDGLSVT), 1296–1313 (AWGKYNINTKVGDGLNVA), and 1315–1332 (MKGKANANIHVGDGLNIN). A compositionally biased stretch (polar residues) spans 1606-1626 (SQQANAVSEHATQNQASQNAL). Disordered regions lie at residues 1606-1682 (SQQA…ESEA) and 1738-1895 (IAAA…EQEA). The segment covering 1627 to 1646 (SDKERAEADRQRLEQEKQKQ) has biased composition (basic and acidic residues). Residues 1652–1671 (GSQSQLESTDQQALGNNGQA) are compositionally biased toward polar residues. The span at 1778–1805 (AEAKADAETRKADAVAKSNDAKQAESDA) shows a compositional bias: basic and acidic residues. Polar residues predominate over residues 1825-1834 (NKANQAQNDA). Residues 1835–1849 (KGTKQNEGDRPDREG) are compositionally biased toward basic and acidic residues. Over residues 1870-1880 (SHITTDSQTNA) the composition is skewed to polar residues. Residues 2377–2461 (ELMSVTELLD…SLLNQVNSRL (85 aa)) are membrane localization region (MLD). Residues 2537-2901 (EYGQVVADTI…HQVTDVLDAL (365 aa)) are rho inactivation domain (RID). Residues 2998–3113 (VVLFLHGSGS…MPSMTKAITA (116 aa)) form an ABH effector region region. Residues 4111-4295 (PTADGGESRF…AENNKVSLSW (185 aa)) enclose the Peptidase C80 domain. Residues 4117 to 4119 (ESR), 4144 to 4145 (KH), and R4175 contribute to the 1D-myo-inositol hexakisphosphate site. Residue H4181 is the For cysteine protease activity of the active site. S4226 is a 1D-myo-inositol hexakisphosphate binding site. The active-site Nucleophile; for cysteine protease activity is the C4230. Residues 4259–4261 (SVR), 4272–4273 (RK), K4285, and K4290 each bind 1D-myo-inositol hexakisphosphate. Disordered regions lie at residues 4333–4362 (GAIGDNNDVFDAPEKRKAETETSSSSANNK) and 4738–4779 (LKEK…ETPD). Over residues 4750 to 4762 (SSVSVNGASVNSA) the composition is skewed to low complexity.

It depends on Mg(2+) as a cofactor.

Its subcellular location is the secreted. It localises to the host cytoplasm. It is found in the host cytosol. The protein resides in the host cell membrane. It catalyses the reaction L-lysyl-/S-(2E,6E,10E)-geranylgeranyl-L-cysteinyl-[protein] + hexadecanoyl-CoA = N(6)-hexadecanoyl-L-lysyl-/S-(2E,6E,10E)-geranylgeranyl-L-cysteinyl-[protein] + CoA + H(+). It carries out the reaction L-lysyl-/S-(2E,6E,10E)-geranylgeranyl-L-cysteinyl-[protein] + dodecanoyl-CoA = N(6)-dodecanoyl-L-lysyl-/S-(2E,6E,10E)-geranylgeranyl-L-cysteinyl-[protein] + CoA + H(+). The enzyme catalyses L-lysyl-/S-(2E,6E,10E)-geranylgeranyl-L-cysteinyl-[protein] + decanoyl-CoA = N(6)-decanoyl-L-lysyl-/S-(2E,6E,10E)-geranylgeranyl-L-cysteinyl-[protein] + CoA + H(+). In terms of biological role, precursor of a multifunctional toxin that causes destruction of the actin cytoskeleton by covalent cross-linking of actin and inactivation of Rho GTPases when translocated into the host cytoplasm. Upon translocation into the host cell, undergoes autoprocessing in cis mediated by the peptidase C80 domain (also named CPD domain): the protease activity is activated upon binding inositol hexakisphosphate (InsP6) present at the host cell membrane and delivers the Cysteine protease domain-containing toxin F3 chain to the host cytosol. The Cysteine protease domain-containing toxin F3 chain will then further cleave and release effector toxin chains that cause disassembly of the actin cytoskeleton and enhance V.vulnificus colonization of the small intestine, possibly by facilitating evasion of phagocytic cells. Following autocatalytic cleavage in cis, this chain mediates processing in trans to release other individual toxin chains to the host cytosol. Released effector toxin chains cause disassembly of the actin cytoskeleton and enhance V.vulnificus colonization of the small intestine, possibly by facilitating evasion of phagocytic cells. Functionally, actin-directed toxin that catalyzes the covalent cross-linking of host cytoplasmic monomeric actin. Mediates the cross-link between 'Lys-50' of one monomer and 'Glu-270' of another actin monomer, resulting in formation of highly toxic actin oligomers that cause cell rounding. The toxin can be highly efficient at very low concentrations by acting on formin homology family proteins: toxic actin oligomers bind with high affinity to formins and adversely affect both nucleation and elongation abilities of formins, causing their potent inhibition in both profilin-dependent and independent manners. Acts as an acid--amino-acid ligase that transfers the gamma-phosphoryl group of ATP to the 'Glu-270' actin residue, resulting in the formation of an activated acyl phosphate intermediate. This intermediate is further hydrolyzed and the energy of hydrolysis is utilized for the formation of the amide bond between actin subunits. Its function is as follows. N-epsilon-fatty acyltransferase that mediates lysine-palmitoylation of host Rho GTPase proteins, with a strong preference for host Rac1. After delivery to the host cytosol, localizes to the host cell membrane where it palmitoylates host Rho GTPase proteins, resulting in loss of all active GTP-bound Rho and subsequent actin depolymerization. Prenylation of host Rac1 at the C-terminus is required for lysine-palmitoylation. In terms of biological role, indirectly activates the small GTPase CDC42. This chain is Multifunctional-autoprocessing repeats-in-toxin, found in Vibrio vulnificus.